The following is a 615-amino-acid chain: Nuclear cap-binding protein subunit 3 (615 aa).

Lys12 participates in a covalent cross-link: Glycyl lysine isopeptide (Lys-Gly) (interchain with G-Cter in SUMO2). The span at 15-27 (APAGPALGLPSPE) shows a compositional bias: low complexity. Positions 15-43 (APAGPALGLPSPEVESGLERGEPEPMEVE) are disordered. Ser25 carries the phosphoserine modification. Lys70 participates in a covalent cross-link: Glycyl lysine isopeptide (Lys-Gly) (interchain with G-Cter in SUMO2). Ser73 carries the post-translational modification Phosphoserine. The RNA recognition motif (RRM) domain stretch occupies residues 126-187 (ETIYICGVDE…MSSLPAQDKM (62 aa)). A WLDD motif; essential for 7-methylguanosine-containing mRNA cap binding motif is present at residues 155-158 (WLDD). Disordered stretches follow at residues 182–233 (PAQD…LDTL) and 332–400 (HSGL…MDYD). The span at 185–208 (DKMRSRDASEDKSSEKNKKDKQED) shows a compositional bias: basic and acidic residues. Lys186 is covalently cross-linked (Glycyl lysine isopeptide (Lys-Gly) (interchain with G-Cter in SUMO2)). Ser209 and Ser210 each carry phosphoserine. 2 stretches are compositionally biased toward acidic residues: residues 209 to 230 (SSDD…DVEL) and 341 to 360 (EPIE…DMDA). Residues 361 to 383 (DDRVVVEYHEELPGLKQPRERSL) are compositionally biased toward basic and acidic residues. The residue at position 408 (Thr408) is a Phosphothreonine. At Ser410 the chain carries Phosphoserine. 2 disordered regions span residues 430–454 (SIRN…NKLP) and 467–615 (EKRQ…EAES). A compositionally biased stretch (basic and acidic residues) spans 506–516 (VRREPSSDVHS). Lys536 participates in a covalent cross-link: Glycyl lysine isopeptide (Lys-Gly) (interchain with G-Cter in SUMO2). Basic and acidic residues-rich tracts occupy residues 549 to 564 (KTKE…RASG) and 580 to 593 (IKEK…KSRL). Ser563 is subject to Phosphoserine. Over residues 606 to 615 (ESSSGSEAES) the composition is skewed to low complexity. Ser615 bears the Phosphoserine mark.

Belongs to the NCBP3 family. As to quaternary structure, component of an alternative cap-binding complex (CBC) composed of NCBP1/CBP80 and NCBP3. Interacts with SRRT, KPNA3, THOC5 and EIF4A3.

The protein resides in the nucleus. It is found in the cytoplasm. Its function is as follows. Associates with NCBP1/CBP80 to form an alternative cap-binding complex (CBC) which plays a key role in mRNA export. NCBP3 serves as adapter protein linking the capped RNAs (m7GpppG-capped RNA) to NCBP1/CBP80. Unlike the conventional CBC with NCBP2 which binds both small nuclear RNA (snRNA) and messenger (mRNA) and is involved in their export from the nucleus, the alternative CBC with NCBP3 does not bind snRNA and associates only with mRNA thereby playing a role in only mRNA export. The alternative CBC is particularly important in cellular stress situations such as virus infections and the NCBP3 activity is critical to inhibit virus growth. The protein is Nuclear cap-binding protein subunit 3 of Mus musculus (Mouse).